We begin with the raw amino-acid sequence, 148 residues long: Transcription antitermination protein NusB (148 aa).

Belongs to the NusB family.

Its function is as follows. Involved in transcription antitermination. Required for transcription of ribosomal RNA (rRNA) genes. Binds specifically to the boxA antiterminator sequence of the ribosomal RNA (rrn) operons. The polypeptide is Transcription antitermination protein NusB (Saccharopolyspora erythraea (strain ATCC 11635 / DSM 40517 / JCM 4748 / NBRC 13426 / NCIMB 8594 / NRRL 2338)).